A 166-amino-acid polypeptide reads, in one-letter code: MNIRQQITQFLSLAYVFSSAFMLWKTLSVIANSHSPIVVVLSGSMEPAFQRGDILFLWNRDQQQKVGDIVVYEIDGKTIPIVHRVLREHHNQQKQLLLTKGDNNAVDDLSLYAKKQQYLNQKADLVGTVKGYLPFIGYVTILISENVYFKYGMLGLLGLSSLFSNE.

Topologically, residues 1–9 (MNIRQQITQ) are cytoplasmic. A helical; Signal-anchor for type II membrane protein membrane pass occupies residues 10-30 (FLSLAYVFSSAFMLWKTLSVI). The Lumenal portion of the chain corresponds to 31–166 (ANSHSPIVVV…LGLSSLFSNE (136 aa)). Active-site charge relay system residues include S44, H83, and D108. Residues 152–163 (GMLGLLGLSSLF) are C-terminal short (CTS) helix.

It belongs to the peptidase S26B family. As to quaternary structure, component of the signal peptidase complex (SPC) composed of a catalytic subunit SEC11 and three accessory subunits SPC1, SPC2 and SPC3. The complex induces a local thinning of the ER membrane which is used to measure the length of the signal peptide (SP) h-region of protein substrates. This ensures the selectivity of the complex towards h-regions shorter than 18-20 amino acids. SPC associates with the translocon complex.

The protein resides in the endoplasmic reticulum membrane. It catalyses the reaction Cleavage of hydrophobic, N-terminal signal or leader sequences from secreted and periplasmic proteins.. Its function is as follows. Catalytic component of the signal peptidase complex (SPC) which catalyzes the cleavage of N-terminal signal sequences from nascent proteins as they are translocated into the lumen of the endoplasmic reticulum. Specifically cleaves N-terminal signal peptides that contain a hydrophobic alpha-helix (h-region) shorter than 18-20 amino acids. This is Signal peptidase complex catalytic subunit SEC11 (SEC11) from Candida dubliniensis (strain CD36 / ATCC MYA-646 / CBS 7987 / NCPF 3949 / NRRL Y-17841) (Yeast).